A 549-amino-acid chain; its full sequence is GATA-type transcription factor sreA (549 aa).

Residues 40-100 (AQAGREHPQD…TSPKSQKDTS (61 aa)) are disordered. 2 stretches are compositionally biased toward basic and acidic residues: residues 43–72 (GREH…HEGE) and 86–97 (HHVEKTSPKSQK). A GATA-type 1 zinc finger spans residues 106 to 130 (CSNCGTKSTPLWRRSPTGAMICNAC). Residues 141-174 (RPTKRNRTQASPEAYHPQNQSVGSQPDPAVTGSE) form a disordered region. The interval 180-198 (CPGGGNCNGTGGAEGCDGC) is cystein-rich region (CRR). A disordered region spans residues 223–244 (GNSDAVPSPEAEAPARNSGQPE). A GATA-type 2 zinc finger spans residues 251-275 (CQNCGTTVTPLWRRDENGHPICNAC). Disordered regions lie at residues 306 to 332 (RENS…PATL), 375 to 459 (NSGA…RLSS), and 482 to 535 (LGRQ…MREQ). A compositionally biased stretch (low complexity) spans 309–331 (SPTAATHSSHGSSASPEASSPAT). Residues 383–396 (HHPPPPRLLEPGHP) show a composition bias toward pro residues. Low complexity predominate over residues 485–497 (QQQSQPHHPQSSP). Over residues 498-515 (LAPTQAASQSLPGVSNMD) the composition is skewed to polar residues. Residues 511 to 549 (VSNMDNHVEDRRAKLQREAEEMREQLRAKERELAELAGQ) are a coiled coil. Over residues 516-535 (NHVEDRRAKLQREAEEMREQ) the composition is skewed to basic and acidic residues.

It localises to the nucleus. Its function is as follows. GATA-type transcription repressor that regulates iron- acquisition genes through specific binding GATA sequence elements of target promoters. Iron acquisition regulation is critical for survival under both iron-limiting conditions (to acquire essential iron) and iron-replete conditions (to limit iron toxicity). SreA targets include genes encoding a number of key iron-regulated factors such as those involved in siderophore biosynthesis. This chain is GATA-type transcription factor sreA, found in Emericella nidulans (strain FGSC A4 / ATCC 38163 / CBS 112.46 / NRRL 194 / M139) (Aspergillus nidulans).